Consider the following 323-residue polypeptide: Homoserine kinase (323 aa).

97–107 (PHGRGMGSSGA) serves as a coordination point for ATP.

Belongs to the GHMP kinase family. Homoserine kinase subfamily.

Its subcellular location is the cytoplasm. It catalyses the reaction L-homoserine + ATP = O-phospho-L-homoserine + ADP + H(+). It participates in amino-acid biosynthesis; L-threonine biosynthesis; L-threonine from L-aspartate: step 4/5. Catalyzes the ATP-dependent phosphorylation of L-homoserine to L-homoserine phosphate. This chain is Homoserine kinase, found in Leifsonia xyli subsp. xyli (strain CTCB07).